A 151-amino-acid chain; its full sequence is Cytochrome c-type biogenesis protein CcmE (151 aa).

The Cytoplasmic segment spans residues methionine 1–arginine 8. Residues leucine 9–alanine 29 form a helical; Signal-anchor for type II membrane protein membrane-spanning segment. Over leucine 30–glycine 151 the chain is Periplasmic. Heme contacts are provided by histidine 124 and tyrosine 128. The segment at proline 131–glycine 151 is disordered.

The protein belongs to the CcmE/CycJ family.

Its subcellular location is the cell inner membrane. Functionally, heme chaperone required for the biogenesis of c-type cytochromes. Transiently binds heme delivered by CcmC and transfers the heme to apo-cytochromes in a process facilitated by CcmF and CcmH. This is Cytochrome c-type biogenesis protein CcmE from Pseudomonas fluorescens (strain ATCC BAA-477 / NRRL B-23932 / Pf-5).